The chain runs to 473 residues: Endoglucanase B (473 aa).

The signal sequence occupies residues 1–17; that stretch reads MKFLNTFSLLSLAIIGS. Residues 18–367 form a catalytic region; the sequence is KAMKNISSKE…GLIKGLGNSI (350 aa). Glu173 acts as the Proton donor in catalysis. The active-site Nucleophile is the Glu295. The segment at 365–387 is linker; the sequence is NSIKTRTTIRRTTTTTTSQSQPT. CBM10 domains lie at 391-427 and 436-473; these read SCFSVNLGYSCCNGCEVEYTDSDGEWGVENGNWCGIK and ICWSEKLGYPCCQNTSSVVYTDNDGKWGVENGNWCGIY.

This sequence belongs to the glycosyl hydrolase 5 (cellulase A) family.

It carries out the reaction Endohydrolysis of (1-&gt;4)-beta-D-glucosidic linkages in cellulose, lichenin and cereal beta-D-glucans.. In terms of biological role, rate of hydrolysis of cellulo-oligosaccharides increased with increasing chain length from cellotriose to cellopentaose. The polypeptide is Endoglucanase B (CELB) (Neocallimastix patriciarum (Rumen fungus)).